We begin with the raw amino-acid sequence, 281 residues long: uncharacterized protein (281 aa).

Transmembrane regions (helical) follow at residues 8–28 (ALPV…FIWS), 97–117 (LAVA…RGYG), 147–167 (PARI…GLAV), and 210–230 (IASV…IVPA).

It to S.pombe bem46 and yeast YNL320w.

It localises to the cell membrane. This is an uncharacterized protein from Mycobacterium tuberculosis (strain ATCC 25618 / H37Rv).